The primary structure comprises 217 residues: Uracil-DNA glycosylase (217 aa).

D62 functions as the Proton acceptor in the catalytic mechanism.

This sequence belongs to the uracil-DNA glycosylase (UDG) superfamily. UNG family.

It localises to the cytoplasm. It carries out the reaction Hydrolyzes single-stranded DNA or mismatched double-stranded DNA and polynucleotides, releasing free uracil.. In terms of biological role, excises uracil residues from the DNA which can arise as a result of misincorporation of dUMP residues by DNA polymerase or due to deamination of cytosine. The chain is Uracil-DNA glycosylase from Streptococcus equi subsp. zooepidemicus (strain MGCS10565).